We begin with the raw amino-acid sequence, 128 residues long: Leucine-rich single-pass membrane protein 1 (128 aa).

The residue at position 24 (Ser-24) is a Phosphoserine. A helical transmembrane segment spans residues 65-85 (VGLIIVLIISLALVSFVIFLI). A coiled-coil region spans residues 87–111 (QTENKMEDVSRRLAAEGKDIDDLKK).

The protein localises to the membrane. In Bos taurus (Bovine), this protein is Leucine-rich single-pass membrane protein 1 (LSMEM1).